The primary structure comprises 251 residues: Methionine aminopeptidase (251 aa).

His79 is a binding site for substrate. A divalent metal cation is bound by residues Asp96, Asp107, and His170. His177 lines the substrate pocket. Glu204 and Glu235 together coordinate a divalent metal cation.

This sequence belongs to the peptidase M24A family. Methionine aminopeptidase type 1 subfamily. In terms of assembly, monomer. It depends on Co(2+) as a cofactor. Zn(2+) serves as cofactor. Mn(2+) is required as a cofactor. The cofactor is Fe(2+).

The catalysed reaction is Release of N-terminal amino acids, preferentially methionine, from peptides and arylamides.. In terms of biological role, removes the N-terminal methionine from nascent proteins. The N-terminal methionine is often cleaved when the second residue in the primary sequence is small and uncharged (Met-Ala-, Cys, Gly, Pro, Ser, Thr, or Val). Requires deformylation of the N(alpha)-formylated initiator methionine before it can be hydrolyzed. This Borreliella burgdorferi (strain ATCC 35210 / DSM 4680 / CIP 102532 / B31) (Borrelia burgdorferi) protein is Methionine aminopeptidase.